Consider the following 434-residue polypeptide: Gamma-glutamyl phosphate reductase (434 aa).

This sequence belongs to the gamma-glutamyl phosphate reductase family.

The protein localises to the cytoplasm. It carries out the reaction L-glutamate 5-semialdehyde + phosphate + NADP(+) = L-glutamyl 5-phosphate + NADPH + H(+). Its pathway is amino-acid biosynthesis; L-proline biosynthesis; L-glutamate 5-semialdehyde from L-glutamate: step 2/2. Catalyzes the NADPH-dependent reduction of L-glutamate 5-phosphate into L-glutamate 5-semialdehyde and phosphate. The product spontaneously undergoes cyclization to form 1-pyrroline-5-carboxylate. The sequence is that of Gamma-glutamyl phosphate reductase from Nostoc sp. (strain PCC 7120 / SAG 25.82 / UTEX 2576).